The chain runs to 212 residues: Putative tyrosine-protein phosphatase R622 (212 aa).

Residues 9-191 (KISQVTNNIF…LQGYQSKKEN (183 aa)) enclose the Tyrosine-protein phosphatase domain. Cysteine 135 acts as the Phosphocysteine intermediate in catalysis.

Belongs to the protein-tyrosine phosphatase family. Non-receptor class dual specificity subfamily.

The enzyme catalyses O-phospho-L-tyrosyl-[protein] + H2O = L-tyrosyl-[protein] + phosphate. The chain is Putative tyrosine-protein phosphatase R622 from Acanthamoeba polyphaga mimivirus (APMV).